A 406-amino-acid chain; its full sequence is Imidazolonepropionase (406 aa).

The Fe(3+) site is built by H65 and H67. Zn(2+)-binding residues include H65 and H67. Residues R74, Y137, and H170 each coordinate 4-imidazolone-5-propanoate. Y137 provides a ligand contact to N-formimidoyl-L-glutamate. Fe(3+) is bound at residue H235. H235 serves as a coordination point for Zn(2+). Q238 contributes to the 4-imidazolone-5-propanoate binding site. D310 lines the Fe(3+) pocket. D310 contributes to the Zn(2+) binding site. Residues N312 and G314 each coordinate N-formimidoyl-L-glutamate. T315 is a binding site for 4-imidazolone-5-propanoate.

This sequence belongs to the metallo-dependent hydrolases superfamily. HutI family. Requires Zn(2+) as cofactor. The cofactor is Fe(3+).

The protein resides in the cytoplasm. It catalyses the reaction 4-imidazolone-5-propanoate + H2O = N-formimidoyl-L-glutamate. Its pathway is amino-acid degradation; L-histidine degradation into L-glutamate; N-formimidoyl-L-glutamate from L-histidine: step 3/3. Its function is as follows. Catalyzes the hydrolytic cleavage of the carbon-nitrogen bond in imidazolone-5-propanoate to yield N-formimidoyl-L-glutamate. It is the third step in the universal histidine degradation pathway. The protein is Imidazolonepropionase of Vibrio vulnificus (strain CMCP6).